Reading from the N-terminus, the 209-residue chain is 8-oxoguanine DNA glycosylase/AP lyase (209 aa).

Residues lysine 132 and aspartate 150 contribute to the active site.

The protein belongs to the type-2 OGG1 family.

The enzyme catalyses 2'-deoxyribonucleotide-(2'-deoxyribose 5'-phosphate)-2'-deoxyribonucleotide-DNA = a 3'-end 2'-deoxyribonucleotide-(2,3-dehydro-2,3-deoxyribose 5'-phosphate)-DNA + a 5'-end 5'-phospho-2'-deoxyribonucleoside-DNA + H(+). Its function is as follows. Catalyzes the excision of an oxidatively damaged form of guanine (7,8-dihydro-8-oxoguanine = 8-oxoG) from DNA. Also cleaves the DNA backbone at apurinic/apyrimidinic sites (AP sites). The polypeptide is 8-oxoguanine DNA glycosylase/AP lyase (Picrophilus torridus (strain ATCC 700027 / DSM 9790 / JCM 10055 / NBRC 100828 / KAW 2/3)).